An 855-amino-acid polypeptide reads, in one-letter code: DNA mismatch repair protein MutS (855 aa).

616–623 (GPNMGGKS) is a binding site for ATP.

Belongs to the DNA mismatch repair MutS family.

This protein is involved in the repair of mismatches in DNA. It is possible that it carries out the mismatch recognition step. This protein has a weak ATPase activity. The chain is DNA mismatch repair protein MutS from Escherichia coli O139:H28 (strain E24377A / ETEC).